The primary structure comprises 121 residues: Large ribosomal subunit protein bL12 (121 aa).

Belongs to the bacterial ribosomal protein bL12 family. Homodimer. Part of the ribosomal stalk of the 50S ribosomal subunit. Forms a multimeric L10(L12)X complex, where L10 forms an elongated spine to which 2 to 4 L12 dimers bind in a sequential fashion. Binds GTP-bound translation factors.

Forms part of the ribosomal stalk which helps the ribosome interact with GTP-bound translation factors. Is thus essential for accurate translation. In Serratia proteamaculans (strain 568), this protein is Large ribosomal subunit protein bL12.